A 65-amino-acid chain; its full sequence is VVYTDCTESGEDLCLCEGSNVCGEGNKCILGSDGEKNECVTGEGTPKPQSHNDGDFEEIPEEYLQ.

An interaction with thrombin active site region spans residues 1–3; the sequence is VVY. Intrachain disulfides connect cysteine 6–cysteine 14, cysteine 16–cysteine 28, and cysteine 22–cysteine 39. Positions 32–65 are disordered; that stretch reads SDGEKNECVTGEGTPKPQSHNDGDFEEIPEEYLQ. Residue threonine 45 is glycosylated (O-linked (GalNAc...) threonine). Residues 55–65 form an interaction with fibrinogen-binding exosite of thrombin region; that stretch reads DFEEIPEEYLQ. Residues 55–65 are compositionally biased toward acidic residues; the sequence is DFEEIPEEYLQ. A Sulfotyrosine modification is found at tyrosine 63.

The protein belongs to the protease inhibitor I14 (hirudin) family.

The protein resides in the secreted. In terms of biological role, hirudin is a potent thrombin-specific protease inhibitor. It forms a stable non-covalent complex with alpha-thrombin, thereby abolishing its ability to cleave fibrinogen. The polypeptide is Hirudin-3A' (Hirudo medicinalis (Medicinal leech)).